Here is a 431-residue protein sequence, read N- to C-terminus: MKFTESEKLHQEALEHIVGGVNSPSRSYKAVGGGSPVAMEKGEGAYFWDVDGNRYIDYLAAYGPIITGHAHPHITKAITKAAESGVLYGTPTKHEVTFAKMLKEAMPALDKVRFVNSGTEAVMTTIRVARAYTGRTKIIKFAGCYHGHSDLVLVAAGSGPSTLGTPDSAGVPKSIANEVITVPFNDIDSYKEALDRWGDEVAAVLVEPIVGNFGIVEPKDGFLQQVNDLTHEKGALVIYDEVITAFRFMYGGAQDLLQVKPDLTALGKIIGGGLPIGAYGGKKEIMEQVAPLGPAYQAGTMAGNPASILSGIACLEVLKQDGVYERLDQLGAMLEEGILAHAKKHQVDITVNRLKGALTVYFTKETIVNYEQAENTDGEMFARFFKLMLSQGINLAPSKYEAWFLTIAHTEKDISETLQAVDRAFEQLKQS.

Lys268 is subject to N6-(pyridoxal phosphate)lysine.

This sequence belongs to the class-III pyridoxal-phosphate-dependent aminotransferase family. HemL subfamily. In terms of assembly, homodimer. Pyridoxal 5'-phosphate serves as cofactor.

The protein localises to the cytoplasm. It catalyses the reaction (S)-4-amino-5-oxopentanoate = 5-aminolevulinate. It participates in porphyrin-containing compound metabolism; protoporphyrin-IX biosynthesis; 5-aminolevulinate from L-glutamyl-tRNA(Glu): step 2/2. This is Glutamate-1-semialdehyde 2,1-aminomutase 1 from Bacillus pumilus (strain SAFR-032).